The sequence spans 595 residues: Probable hydrolase M10 (595 aa).

Residues 1–23 (MRFTSTILLRVAVLLSLGGGSQT) form the signal peptide. N-linked (GlcNAc...) asparagine glycosylation is found at Asn59, Asn87, Asn266, Asn436, Asn457, and Asn561.

It belongs to the beta-lactamase family.

The protein operates within secondary metabolite biosynthesis. Functionally, probable hydrolase; part of the gene cluster that mediates the biosynthesis of squalestatin S1 (SQS1, also known as zaragozic acid A), a heavily oxidized fungal polyketide that offers potent cholesterol lowering activity by targeting squalene synthase (SS). SQS1 is composed of a 2,8-dioxobicyclic[3.2.1]octane-3,4,5-tricarboxyclic acid core that is connected to two lipophilic polyketide arms. These initial steps feature the priming of an unusual benzoic acid starter unit onto the highly reducing polyketide synthase pks2, followed by oxaloacetate extension and product release to generate a tricarboxylic acid containing product. The phenylalanine ammonia lyase (PAL) M7 and the acyl-CoA ligase M9 are involved in transforming phenylalanine into benzoyl-CoA. The citrate synthase-like protein R3 is involved in connecting the C-alpha-carbons of the hexaketide chain and oxaloacetate to afford the tricarboxylic acid unit. The potential hydrolytic enzymes, M8 and M10, are in close proximity to pks2 and may participate in product release. On the other side, the tetraketide arm is synthesized by a the squalestatin tetraketide synthase pks1 and enzymatically esterified to the core in the last biosynthetic step, by the acetyltransferase M4. The biosynthesis of the tetraketide must involve 3 rounds of chain extension. After the first and second rounds methyl-transfer occurs, and in all rounds of extension the ketoreductase and dehydratase are active. The enoyl reductase and C-MeT of pks1 are not active in the final round of extension. The acetyltransferase M4 appears to have a broad substrate selectivity for its acyl CoA substrate, allowing the in vitro synthesis of novel squalestatins. The biosynthesis of SQS1 requires several oxidative steps likely performed by oxidoreductases M1, R1 and R2. Finally, in support of the identification of the cluster as being responsible for SQS1 production, the cluster contains a gene encoding a putative squalene synthase (SS) R6, suggesting a likely mechanism for self-resistance. In Phoma sp. (strain ATCC 20986 / MF5453), this protein is Probable hydrolase M10.